The sequence spans 450 residues: Phosphoglucosamine mutase (450 aa).

Serine 97 serves as the catalytic Phosphoserine intermediate. Mg(2+) is bound by residues serine 97, aspartate 236, aspartate 238, and aspartate 240. Position 97 is a phosphoserine (serine 97).

It belongs to the phosphohexose mutase family. Requires Mg(2+) as cofactor. Post-translationally, activated by phosphorylation.

The catalysed reaction is alpha-D-glucosamine 1-phosphate = D-glucosamine 6-phosphate. Functionally, catalyzes the conversion of glucosamine-6-phosphate to glucosamine-1-phosphate. This is Phosphoglucosamine mutase from Prochlorococcus marinus (strain MIT 9215).